The chain runs to 82 residues: Omega-conotoxin PnVIB (82 aa).

The N-terminal stretch at 1 to 22 (MKLTCMMIVAVLFLTAWTVVTA) is a signal peptide. The propeptide occupies 23–52 (EPHSSNVLENLYLKAHHEMENPEASKLNTR). Cystine bridges form between cysteine 56–cysteine 73, cysteine 63–cysteine 77, and cysteine 72–cysteine 81.

Expressed by the venom duct.

It is found in the secreted. Functionally, omega-conotoxins act at presynaptic membranes, they bind and block voltage-gated calcium channels (Cav). Acts on high voltage-activated (HVA) calcium currents in molluscan neurons. The sequence is that of Omega-conotoxin PnVIB from Conus pennaceus (Feathered cone).